Here is a 498-residue protein sequence, read N- to C-terminus: Protein DETOXIFICATION 30 (498 aa).

Transmembrane regions (helical) follow at residues 64-86, 91-111, 136-156, 161-181, 197-217, 227-247, 277-297, 302-322, 349-369, 393-413, 419-439, and 447-467; these read YSLGAATQVFAGHISTIALAAVS, VIAGFSFGVMLGMGSALETLC, VTAVILSLLYIFAAPILAFIG, ISSATGIFSIYMIPQIFAYAV, VMAAISAVALVLHVLLTWFVI, LAVVLNASWWFIVVAQLVYIF, AVMLCLEVWYLMAVILFAGYL, ISVAALSICMNILGWTAMIAI, LVAVITSTVIGLAISIALLIF, ILAVSIVINNVQPVLSGVAVG, VVAYVNIVCYYVFGIPFGLLL, and VMGIWCGMLTGTVVQTIVLTW.

This sequence belongs to the multi antimicrobial extrusion (MATE) (TC 2.A.66.1) family.

It is found in the membrane. The protein is Protein DETOXIFICATION 30 of Arabidopsis thaliana (Mouse-ear cress).